The following is a 227-amino-acid chain: 2,3-bisphosphoglycerate-dependent phosphoglycerate mutase (227 aa).

Substrate-binding positions include 7–14 (RHGFSEWN), 20–21 (TG), arginine 59, 86–89 (ERHY), lysine 97, 113–114 (RR), and 182–183 (GN). Histidine 8 functions as the Tele-phosphohistidine intermediate in the catalytic mechanism. Glutamate 86 (proton donor/acceptor) is an active-site residue.

The protein belongs to the phosphoglycerate mutase family. BPG-dependent PGAM subfamily. In terms of assembly, homodimer.

The enzyme catalyses (2R)-2-phosphoglycerate = (2R)-3-phosphoglycerate. It functions in the pathway carbohydrate degradation; glycolysis; pyruvate from D-glyceraldehyde 3-phosphate: step 3/5. Its function is as follows. Catalyzes the interconversion of 2-phosphoglycerate and 3-phosphoglycerate. The sequence is that of 2,3-bisphosphoglycerate-dependent phosphoglycerate mutase from Haemophilus influenzae (strain PittGG).